Reading from the N-terminus, the 122-residue chain is Acidic phospholipase A2 5 (122 aa).

Disulfide bonds link C26–C115, C28–C44, C43–C95, C49–C122, C50–C88, C57–C81, and C75–C86. Ca(2+) is bound by residues F27, G29, and G31. Residue H47 is part of the active site. A Ca(2+)-binding site is contributed by D48. Residue D89 is part of the active site.

It belongs to the phospholipase A2 family. Group II subfamily. D49 sub-subfamily. Monomer (predominant). Non-covalently linked homodimers are also observed. Ca(2+) is required as a cofactor. As to expression, expressed by the venom gland.

The protein resides in the secreted. It catalyses the reaction a 1,2-diacyl-sn-glycero-3-phosphocholine + H2O = a 1-acyl-sn-glycero-3-phosphocholine + a fatty acid + H(+). Its activity is regulated as follows. Preincubation with heparin slightly increase the enzymatic activity. Functionally, snake venom phospholipase A2 (PLA2) that inhibits platelet aggregation induced by ADP, arachidonic acid and PAF. Acts in a enzymatic independent manner on a proteinase-activated receptor (PAR1, F2R) to evoke calcium release through the inositol 1,4,5-trisphosphate receptor (ITPR1, IP3R) and induces mouse aorta contraction. PAR1, phospholipase C and IP3R inhibitors suppress PA2-induced aorta contraction. PLA2 catalyzes the calcium-dependent hydrolysis of the 2-acyl groups in 3-sn-phosphoglycerides. The protein is Acidic phospholipase A2 5 of Trimeresurus stejnegeri (Chinese green tree viper).